A 330-amino-acid polypeptide reads, in one-letter code: Deoxyhypusine hydroxylase (330 aa).

HEAT-like PBS-type repeat units lie at residues 57-83, 90-116, and 199-225; these read LKHE…VLRN, VRHE…YLSD, and ERYR…GFSG. 4 residues coordinate Fe cation: His59, Glu60, His92, and Glu93. Fe cation contacts are provided by His232, Glu233, His265, and Glu266. An HEAT-like PBS-type 4 repeat occupies 263 to 289; the sequence is VRHEAAEALGGIATPEVLPPLKEWVAR.

This sequence belongs to the deoxyhypusine hydroxylase family. The cofactor is Fe(2+).

It localises to the cytoplasm. It is found in the nucleus. It carries out the reaction [eIF5A protein]-deoxyhypusine + AH2 + O2 = [eIF5A protein]-hypusine + A + H2O. Its pathway is protein modification; eIF5A hypusination. Catalyzes the hydroxylation of the N(6)-(4-aminobutyl)-L-lysine intermediate to form hypusine, an essential post-translational modification only found in mature eIF-5A factor. This chain is Deoxyhypusine hydroxylase, found in Lentinula edodes (Shiitake mushroom).